A 378-amino-acid chain; its full sequence is Manganese peroxidase 1 (378 aa).

A signal peptide spans 1-21 (MAFKSLIAFVALAAAVRAAPT). Cystine bridges form between C24–C36, C35–C310, C54–C138, C274–C340, and C362–C369. Mn(2+) contacts are provided by E56 and E60. The Proton acceptor role is filled by H67. Residues D68, G83, D85, and S87 each coordinate Ca(2+). N97 and N152 each carry an N-linked (GlcNAc...) asparagine glycan. H194 contributes to the heme b binding site. Residue S195 coordinates Ca(2+). D200 serves as a coordination point for Mn(2+). 4 residues coordinate Ca(2+): D212, T214, T217, and D219. A glycan (N-linked (GlcNAc...) asparagine) is linked at N238.

Belongs to the peroxidase family. Ligninase subfamily. It depends on Ca(2+) as a cofactor. The cofactor is heme b.

The protein resides in the secreted. The enzyme catalyses 2 Mn(2+) + H2O2 + 2 H(+) = 2 Mn(3+) + 2 H2O. Functionally, catalyzes the oxidation of Mn(2+) to Mn(3+). The latter, acting as a diffusible redox mediator, is capable of oxidizing a variety of lignin compounds. The sequence is that of Manganese peroxidase 1 (MNP1) from Phanerodontia chrysosporium (White-rot fungus).